Reading from the N-terminus, the 421-residue chain is Enolase (421 aa).

Residue Gln-165 coordinates (2R)-2-phosphoglycerate. Glu-207 (proton donor) is an active-site residue. Mg(2+)-binding residues include Asp-244, Glu-285, and Asp-312. (2R)-2-phosphoglycerate contacts are provided by Lys-337, Arg-366, Ser-367, and Lys-388. The active-site Proton acceptor is the Lys-337.

This sequence belongs to the enolase family. Requires Mg(2+) as cofactor.

The protein resides in the cytoplasm. The protein localises to the secreted. It is found in the cell surface. It carries out the reaction (2R)-2-phosphoglycerate = phosphoenolpyruvate + H2O. It functions in the pathway carbohydrate degradation; glycolysis; pyruvate from D-glyceraldehyde 3-phosphate: step 4/5. Catalyzes the reversible conversion of 2-phosphoglycerate (2-PG) into phosphoenolpyruvate (PEP). It is essential for the degradation of carbohydrates via glycolysis. In Ehrlichia canis (strain Jake), this protein is Enolase.